We begin with the raw amino-acid sequence, 107 residues long: MMKVLVVVALLVTLISYSSSEGIDDLEADELLSLMANEQTRKECIPKHHECTSNKHGCCRGNFFKCKCQCTTVVTQDGEQTERCFCGTPPHHKAAELVVGFGKKIFG.

The signal sequence occupies residues 1–20 (MMKVLVVVALLVTLISYSSS). A propeptide spanning residues 21 to 41 (EGIDDLEADELLSLMANEQTR) is cleaved from the precursor. Intrachain disulfides connect C44/C59, C51/C68, C58/C86, and C70/C84.

The protein belongs to the neurotoxin 19 (CSTX) family. 04 (U1-Lctx) subfamily. In terms of tissue distribution, expressed by the venom gland.

It is found in the secreted. In Lycosa singoriensis (Wolf spider), this protein is U1-lycotoxin-Ls1m.